Consider the following 337-residue polypeptide: Lipoate-protein ligase A (337 aa).

Residues 29-216 (DQNQTILFLW…AFFNYYQTTV (188 aa)) enclose the BPL/LPL catalytic domain. ATP contacts are provided by residues Arg71, 76 to 79 (GAVF), and Lys134. Residue Lys134 participates in (R)-lipoate binding.

This sequence belongs to the LplA family. In terms of assembly, monomer.

It localises to the cytoplasm. The enzyme catalyses L-lysyl-[lipoyl-carrier protein] + (R)-lipoate + ATP = N(6)-[(R)-lipoyl]-L-lysyl-[lipoyl-carrier protein] + AMP + diphosphate + H(+). It functions in the pathway protein modification; protein lipoylation via exogenous pathway; protein N(6)-(lipoyl)lysine from lipoate: step 1/2. The protein operates within protein modification; protein lipoylation via exogenous pathway; protein N(6)-(lipoyl)lysine from lipoate: step 2/2. Catalyzes both the ATP-dependent activation of exogenously supplied lipoate to lipoyl-AMP and the transfer of the activated lipoyl onto the lipoyl domains of lipoate-dependent enzymes. This Blochmanniella floridana protein is Lipoate-protein ligase A.